Consider the following 279-residue polypeptide: Phycobilisome rod-core linker polypeptide CpcG1 (279 aa).

Residues 11–189 (SSQNQRVEGY…YWRDRQTLNA (179 aa)) form the PBS-linker domain.

The protein belongs to the phycobilisome linker protein family. As to quaternary structure, part of the phycobilisome, a hemidiscoidal structure that is composed of two distinct substructures: a core complex and a number of rods radiating from the core.

The protein resides in the cellular thylakoid membrane. Functionally, rod-core linker protein required for attachment of phycocyanin to allophycocyanin in cores of phycobilisomes. Its function is as follows. Linker polypeptides determine the state of aggregation and the location of the disk-shaped phycobiliprotein units within the phycobilisome and modulate their spectroscopic properties in order to mediate a directed and optimal energy transfer. The sequence is that of Phycobilisome rod-core linker polypeptide CpcG1 from Nostoc sp. (strain PCC 7120 / SAG 25.82 / UTEX 2576).